We begin with the raw amino-acid sequence, 423 residues long: MAGKRSGWSRAALLQLLLGVNLVVMPPTQARSLRFVTLLYRHGDRSPVKTYPKDPYQEEEWPQGFGQLTKEGMLQHWELGQALRQRYHGFLNTSYHRQEVYVRSTDFDRTLMSAEANLAGLFPPNGMQRFNPNISWQPIPVHTVPITEDRLLKFPLGPCPRYEQLQNETRQTPEYQNESSRNAQFLDMVANETGLTDLTLETVWNVYDTLFCEQTHGLRLPPWASPQTMQRLSRLKDFSFRFLFGIYQQAEKARLQGGVLLAQIRKNLTLMATTSQLPKLLVYSAHDTTLVALQMALDVYNGEQAPYASCHIFELYQEDSGNFSVEMYFRNESDKAPWPLSLPGCPHRCPLQDFLRLTEPVVPKDWQQECQVASGPADTEVIVALAVCGSILFLLIVLLLTVLFRMQAQPPGYRHVADGEDHA.

The first 30 residues, 1 to 30 (MAGKRSGWSRAALLQLLLGVNLVVMPPTQA), serve as a signal peptide directing secretion. The Lumenal portion of the chain corresponds to 31-380 (RSLRFVTLLY…QVASGPADTE (350 aa)). Catalysis depends on His42, which acts as the Nucleophile. Residues Asn92, Asn133, Asn167, Asn177, Asn191, and Asn267 are each glycosylated (N-linked (GlcNAc...) asparagine). 3 cysteine pairs are disulfide-bonded: Cys159–Cys370, Cys212–Cys310, and Cys345–Cys349. The active-site Proton donor is the Asp287. 2 N-linked (GlcNAc...) asparagine glycosylation sites follow: Asn322 and Asn331. Residues 381-401 (VIVALAVCGSILFLLIVLLLT) traverse the membrane as a helical segment. The Cytoplasmic portion of the chain corresponds to 402 to 423 (VLFRMQAQPPGYRHVADGEDHA).

The protein belongs to the histidine acid phosphatase family. In terms of processing, the membrane-bound form is converted to the soluble form by sequential proteolytic processing. First, the C-terminal cytoplasmic tail is removed. Cleavage by a lysosomal protease releases the soluble form in the lysosome lumen.

The protein localises to the lysosome membrane. The protein resides in the lysosome lumen. The enzyme catalyses a phosphate monoester + H2O = an alcohol + phosphate. The polypeptide is Lysosomal acid phosphatase (ACP2) (Pongo abelii (Sumatran orangutan)).